The following is a 455-amino-acid chain: Argininosuccinate lyase (455 aa).

This sequence belongs to the lyase 1 family. Argininosuccinate lyase subfamily.

The protein localises to the cytoplasm. The enzyme catalyses 2-(N(omega)-L-arginino)succinate = fumarate + L-arginine. It functions in the pathway amino-acid biosynthesis; L-arginine biosynthesis; L-arginine from L-ornithine and carbamoyl phosphate: step 3/3. The chain is Argininosuccinate lyase from Shewanella sp. (strain ANA-3).